Consider the following 339-residue polypeptide: Ketol-acid reductoisomerase (NADP(+)) (339 aa).

The 182-residue stretch at 1-182 (MRVYYDRDAD…GGGRAGIIET (182 aa)) folds into the KARI N-terminal Rossmann domain. NADP(+)-binding positions include 24–27 (YGSQ), Arg48, Ser51, Ser53, and 83–86 (DELQ). His108 is an active-site residue. Gly134 is an NADP(+) binding site. Residues 183–328 (SFREETETDL…ARLRDMMPWI (146 aa)) form the KARI C-terminal knotted domain. The Mg(2+) site is built by Asp191, Glu195, Glu227, and Glu231. Ser252 contacts substrate.

The protein belongs to the ketol-acid reductoisomerase family. Mg(2+) is required as a cofactor.

It catalyses the reaction (2R)-2,3-dihydroxy-3-methylbutanoate + NADP(+) = (2S)-2-acetolactate + NADPH + H(+). The enzyme catalyses (2R,3R)-2,3-dihydroxy-3-methylpentanoate + NADP(+) = (S)-2-ethyl-2-hydroxy-3-oxobutanoate + NADPH + H(+). Its pathway is amino-acid biosynthesis; L-isoleucine biosynthesis; L-isoleucine from 2-oxobutanoate: step 2/4. The protein operates within amino-acid biosynthesis; L-valine biosynthesis; L-valine from pyruvate: step 2/4. Functionally, involved in the biosynthesis of branched-chain amino acids (BCAA). Catalyzes an alkyl-migration followed by a ketol-acid reduction of (S)-2-acetolactate (S2AL) to yield (R)-2,3-dihydroxy-isovalerate. In the isomerase reaction, S2AL is rearranged via a Mg-dependent methyl migration to produce 3-hydroxy-3-methyl-2-ketobutyrate (HMKB). In the reductase reaction, this 2-ketoacid undergoes a metal-dependent reduction by NADPH to yield (R)-2,3-dihydroxy-isovalerate. The polypeptide is Ketol-acid reductoisomerase (NADP(+)) (Afipia carboxidovorans (strain ATCC 49405 / DSM 1227 / KCTC 32145 / OM5) (Oligotropha carboxidovorans)).